Reading from the N-terminus, the 365-residue chain is Elongation factor Tu (365 aa).

GTP is bound by residues His-1–Thr-7, Asp-62–His-66, and Asn-117–Asp-120. One can recognise a tr-type G domain in the interval His-1–Glu-185. Thr-7 provides a ligand contact to Mg(2+).

This sequence belongs to the TRAFAC class translation factor GTPase superfamily. Classic translation factor GTPase family. EF-Tu/EF-1A subfamily. Monomer.

It is found in the cytoplasm. The enzyme catalyses GTP + H2O = GDP + phosphate + H(+). In terms of biological role, GTP hydrolase that promotes the GTP-dependent binding of aminoacyl-tRNA to the A-site of ribosomes during protein biosynthesis. The protein is Elongation factor Tu of Buchnera aphidicola subsp. Schlechtendalia chinensis.